Consider the following 501-residue polypeptide: Glycerol kinase (501 aa).

Threonine 11 lines the ADP pocket. ATP-binding residues include threonine 11, threonine 12, and serine 13. Threonine 11 contributes to the sn-glycerol 3-phosphate binding site. ADP is bound at residue arginine 15. Residues arginine 81, glutamate 82, tyrosine 133, and aspartate 242 each contribute to the sn-glycerol 3-phosphate site. Positions 81, 82, 133, 242, and 243 each coordinate glycerol. The ADP site is built by threonine 264 and glycine 307. ATP is bound by residues threonine 264, glycine 307, glutamine 311, and glycine 409. ADP contacts are provided by glycine 409 and asparagine 413.

It belongs to the FGGY kinase family.

The enzyme catalyses glycerol + ATP = sn-glycerol 3-phosphate + ADP + H(+). It participates in polyol metabolism; glycerol degradation via glycerol kinase pathway; sn-glycerol 3-phosphate from glycerol: step 1/1. Inhibited by fructose 1,6-bisphosphate (FBP). Functionally, key enzyme in the regulation of glycerol uptake and metabolism. Catalyzes the phosphorylation of glycerol to yield sn-glycerol 3-phosphate. This Borreliella burgdorferi (strain ATCC 35210 / DSM 4680 / CIP 102532 / B31) (Borrelia burgdorferi) protein is Glycerol kinase.